Here is an 80-residue protein sequence, read N- to C-terminus: Spermatid-specific protein S2 (80 aa).

Basic residues predominate over residues 1–36 (VKSRYHQRQYRARKRYAKARRTKKPKRRPKPPRKLR). Residues 1–44 (VKSRYHQRQYRARKRYAKARRTKKPKRRPKPPRKLRYAPSKKQP) form a disordered region.

It is found in the nucleus. It localises to the chromosome. Its function is as follows. Involved in nuclear basic protein transition: histones are replaced by spermatid specific proteins which are themselves replaced by protamines in late spermatids. The protein is Spermatid-specific protein S2 of Scyliorhinus canicula (Small-spotted catshark).